We begin with the raw amino-acid sequence, 330 residues long: Malate dehydrogenase (330 aa).

12 to 18 (GAAGQIG) lines the NAD(+) pocket. Residues Arg93 and Arg99 each coordinate substrate. NAD(+)-binding positions include Asn106, Gln113, and 130–132 (VGN). Substrate-binding residues include Asn132 and Arg163. Residue His188 is the Proton acceptor of the active site.

The protein belongs to the LDH/MDH superfamily. MDH type 2 family.

It catalyses the reaction (S)-malate + NAD(+) = oxaloacetate + NADH + H(+). Functionally, catalyzes the reversible oxidation of malate to oxaloacetate. The chain is Malate dehydrogenase from Legionella pneumophila (strain Lens).